The primary structure comprises 250 residues: MFQQIGAVQAKSGTDEPAHPCEKFPPERKCEAVFWKPLPRHEAREILLAARKYELAMKQPGKRTGPLGHVALEVLDYLTNLVDFGNGRLDPSISTIMEKIGRAESCMSALYPNRQRGRRPAGAADKQRLPLEPAGARPRALLGKYVRKAAPLPDDAAQARQERHDTIKAHMDSLSPADRLRETVEDRTRAEQLAGYVERAAQNRPSGPRKAARRRQQSRCSFTTPNRPRRTLPSSHPQKFGGTKGRKAFE.

Disordered stretches follow at residues 1–23 (MFQQ…PCEK) and 168–250 (KAHM…KAFE). Composition is skewed to basic and acidic residues over residues 13 to 23 (GTDEPAHPCEK) and 178 to 190 (DRLR…RTRA). Residues 218-237 (SRCSFTTPNRPRRTLPSSHP) are compositionally biased toward polar residues.

Functionally, required for replication. It likely regulates pTAR copy number. The chain is Replicating protein (repA) from Rhizobium radiobacter (Agrobacterium tumefaciens).